The chain runs to 68 residues: Molybdenum-pterin-binding protein 2 (68 aa).

The region spanning 2 to 68 (SISARNQLKG…VKSTDVMILA (67 aa)) is the Mop domain.

Binds one mole of molybdenum per mole of protein and contains a pterin. This Clostridium pasteurianum protein is Molybdenum-pterin-binding protein 2 (mopII).